We begin with the raw amino-acid sequence, 734 residues long: Sulfate transporter (734 aa).

Basic and acidic residues predominate over residues M1–K18. The interval M1 to R38 is disordered. A phosphoserine mark is found at S12 and S16. 2 helical membrane passes run V113 to L133 and P138 to S158. The N-linked (GlcNAc...) asparagine glycan is linked to N194. 6 helical membrane-spanning segments follow: residues I214–F234, G237–F257, V379–F399, A415–L435, V453–L473, and L519–L539. Positions A563–A714 constitute an STAS domain.

Belongs to the SLC26A/SulP transporter (TC 2.A.53) family. In terms of processing, N-glycosylated.

Its subcellular location is the cell membrane. It localises to the apical cell membrane. It catalyses the reaction oxalate(in) + sulfate(out) = oxalate(out) + sulfate(in). The enzyme catalyses sulfate(out) + 2 chloride(in) = sulfate(in) + 2 chloride(out). It carries out the reaction oxalate(out) + 2 chloride(in) = oxalate(in) + 2 chloride(out). The catalysed reaction is bromide(in) + chloride(out) = bromide(out) + chloride(in). It catalyses the reaction nitrate(in) + chloride(out) = nitrate(out) + chloride(in). The enzyme catalyses iodide(in) + chloride(out) = iodide(out) + chloride(in). Functionally, sulfate transporter which mediates sulfate uptake into chondrocytes in order to maintain adequate sulfation of proteoglycans which is needed for cartilage development. Mediates electroneutral anion exchange of sulfate ions for oxalate ions, sulfate and oxalate ions for chloride and/or hydroxyl ions and chloride ions for bromide, iodide and nitrate ions. The coupling of sulfate transport to both hydroxyl and chloride ions likely serves to ensure transport at both acidic pH when most sulfate uptake is mediated by sulfate-hydroxide exchange and alkaline pH when most sulfate uptake is mediated by sulfate-chloride exchange. Essential for chondrocyte proliferation, differentiation and cell size expansion. In Bos taurus (Bovine), this protein is Sulfate transporter (SLC26A2).